The chain runs to 630 residues: Probable potassium transport system protein Kup (630 aa).

12 consecutive transmembrane segments (helical) span residues 19–39 (GLIG…LYAV), 59–79 (LLSL…VLLI), 108–128 (WIIG…ATIT), 145–165 (PGLK…LFFV), 173–193 (VGGA…ALGL), 220–240 (LLAF…EALY), 255–275 (WLFF…ALVI), 284–304 (PFFF…ATIA), 345–365 (IYVP…VLGF), 374–394 (AYGI…AFVY), 405–425 (TVLV…SNVL), and 427–447 (VFDG…VMTT).

It belongs to the HAK/KUP transporter (TC 2.A.72) family.

The protein resides in the cell inner membrane. It catalyses the reaction K(+)(in) + H(+)(in) = K(+)(out) + H(+)(out). Functionally, transport of potassium into the cell. Likely operates as a K(+):H(+) symporter. The sequence is that of Probable potassium transport system protein Kup from Acidiphilium cryptum (strain JF-5).